A 139-amino-acid chain; its full sequence is Small ribosomal subunit protein uS12 (139 aa).

The interval 1 to 44 is disordered; sequence MPTINQLVKKPRTSKVKKSTAPALNKGYNSHKKKATDLASPQKR. A compositionally biased stretch (basic residues) spans 9-18; that stretch reads KKPRTSKVKK. At Asp-102 the chain carries 3-methylthioaspartic acid.

The protein belongs to the universal ribosomal protein uS12 family. As to quaternary structure, part of the 30S ribosomal subunit. Contacts proteins S8 and S17. May interact with IF1 in the 30S initiation complex.

Its function is as follows. With S4 and S5 plays an important role in translational accuracy. In terms of biological role, interacts with and stabilizes bases of the 16S rRNA that are involved in tRNA selection in the A site and with the mRNA backbone. Located at the interface of the 30S and 50S subunits, it traverses the body of the 30S subunit contacting proteins on the other side and probably holding the rRNA structure together. The combined cluster of proteins S8, S12 and S17 appears to hold together the shoulder and platform of the 30S subunit. This is Small ribosomal subunit protein uS12 from Macrococcus caseolyticus (strain JCSC5402) (Macrococcoides caseolyticum).